A 102-amino-acid polypeptide reads, in one-letter code: Omega-hexatoxin-Hi2b (102 aa).

Residues 1–23 form the signal peptide; sequence MKFSKLSLTLALILTQAIFVLCG. Residues 24-56 constitute a propeptide that is removed on maturation; sequence KINEDFMENGLESHALHDEIRKPIDTEKADAER. 3 disulfide bridges follow: Cys-61/Cys-75, Cys-68/Cys-81, and Cys-74/Cys-86. Leu-98 is modified (leucine amide). Residues 100-102 constitute a propeptide that is removed on maturation; the sequence is RAL.

This sequence belongs to the neurotoxin 15 family. 02 (omega-actx) subfamily. Expressed by the venom gland.

It localises to the secreted. Its function is as follows. Potent inhibitor of insect, but not mammalian, voltage-gated calcium channels (Cav). The sequence is that of Omega-hexatoxin-Hi2b from Hadronyche infensa (Fraser island funnel-web spider).